A 117-amino-acid chain; its full sequence is Large ribosomal subunit protein bL20c (117 aa).

Belongs to the bacterial ribosomal protein bL20 family.

The protein localises to the plastid. It is found in the chloroplast. Binds directly to 23S ribosomal RNA and is necessary for the in vitro assembly process of the 50S ribosomal subunit. It is not involved in the protein synthesizing functions of that subunit. This is Large ribosomal subunit protein bL20c from Platanus occidentalis (Sycamore).